Reading from the N-terminus, the 148-residue chain is Deoxyuridine 5'-triphosphate nucleotidohydrolase (148 aa).

Residues 65–67 (RSG), asparagine 78, 82–84 (TID), and lysine 92 contribute to the substrate site.

Belongs to the dUTPase family. Requires Mg(2+) as cofactor.

It catalyses the reaction dUTP + H2O = dUMP + diphosphate + H(+). It participates in pyrimidine metabolism; dUMP biosynthesis; dUMP from dCTP (dUTP route): step 2/2. This enzyme is involved in nucleotide metabolism: it produces dUMP, the immediate precursor of thymidine nucleotides and it decreases the intracellular concentration of dUTP so that uracil cannot be incorporated into DNA. This Chlorobium phaeovibrioides (strain DSM 265 / 1930) (Prosthecochloris vibrioformis (strain DSM 265)) protein is Deoxyuridine 5'-triphosphate nucleotidohydrolase.